A 102-amino-acid polypeptide reads, in one-letter code: Large ribosomal subunit protein uL24 (102 aa).

This sequence belongs to the universal ribosomal protein uL24 family. Part of the 50S ribosomal subunit.

In terms of biological role, one of two assembly initiator proteins, it binds directly to the 5'-end of the 23S rRNA, where it nucleates assembly of the 50S subunit. Its function is as follows. One of the proteins that surrounds the polypeptide exit tunnel on the outside of the subunit. In Ralstonia pickettii (strain 12J), this protein is Large ribosomal subunit protein uL24.